The primary structure comprises 147 residues: Protein archease (147 aa).

Ca(2+) contacts are provided by Asp17, Asp146, and Val147.

It belongs to the archease family.

In terms of biological role, activates the tRNA-splicing ligase complex by facilitating the enzymatic turnover of catalytic subunit RtcB. Acts by promoting the guanylylation of RtcB, a key intermediate step in tRNA ligation. Can also alter the NTP specificity of RtcB such that ATP, dGTP or ITP is used efficiently. The protein is Protein archease of Pyrobaculum islandicum (strain DSM 4184 / JCM 9189 / GEO3).